We begin with the raw amino-acid sequence, 454 residues long: uncharacterized protein (454 aa).

The HNH domain maps to 364-405; that stretch reads CSRPGCDAPAYHSEVHHVTPWTTTHRTDINDLTLACGPDNRL.

It belongs to the Rv1128c/1148c/1588c/1702c/1945/3466 family.

This is an uncharacterized protein from Mycobacterium tuberculosis (strain CDC 1551 / Oshkosh).